Consider the following 509-residue polypeptide: Ceramide glucosyltransferase (509 aa).

At 1–42 (MIMQLGLTSLAFLALKCDAYNIAPKIDTPNVEPFAPSGGLKL) the chain is on the lumenal side. Residues 43–63 (LAIVAIIWYVVVLLVAYYGFF) traverse the membrane as a helical segment. Topologically, residues 64–384 (EIMQKFSKRK…EATLLEPTTE (321 aa)) are cytoplasmic. A short sequence motif (D1) is located at residue aspartate 123. Aspartate 179 is a short sequence motif (D2). A short sequence motif (D3) is located at residue aspartate 321. Aspartate 321 acts as the Proton acceptor in catalysis. The (Q/R)XXRW signature appears at 361 to 365 (RRIRW). A helical transmembrane segment spans residues 385 to 405 (CLLCGTFGTFAISTLFLQSYF). Topologically, residues 406 to 408 (NWK) are lumenal. The chain crosses the membrane as a helical span at residues 409–429 (FFIFHLLVWMVTDYTQFHILL). Residues 430–466 (TNASQDTATCNVPYFAEPNFNAYGSPFESSNLRTFHR) lie on the Cytoplasmic side of the membrane. The chain crosses the membrane as a helical span at residues 467–487 (WVLYWLLREVLALPIWISAML). At 488 to 509 (GTRIIWRNRPFRINVDLSAEEL) the chain is on the lumenal side.

It belongs to the glycosyltransferase 2 family.

Its subcellular location is the golgi apparatus membrane. It catalyses the reaction an N-acylsphing-4-enine + UDP-alpha-D-glucose = a beta-D-glucosyl-(1&lt;-&gt;1')-N-acylsphing-4-enine + UDP + H(+). The protein operates within lipid metabolism; sphingolipid metabolism. Its function is as follows. Catalyzes the final step in the biosynthesis of the membrane lipid glucosylceramide (GluCer), the transfer of glucose to ceramide. Glucosylceramides play important roles in growth, differentiation and pathogenicity. This Komagataella phaffii (strain GS115 / ATCC 20864) (Yeast) protein is Ceramide glucosyltransferase.